Consider the following 387-residue polypeptide: Protein RecA (387 aa).

Gly78 to Thr85 lines the ATP pocket. Residues Lys355 to Ser369 are compositionally biased toward basic and acidic residues. The tract at residues Lys355–Glu387 is disordered.

It belongs to the RecA family.

The protein resides in the cytoplasm. Its function is as follows. Can catalyze the hydrolysis of ATP in the presence of single-stranded DNA, the ATP-dependent uptake of single-stranded DNA by duplex DNA, and the ATP-dependent hybridization of homologous single-stranded DNAs. It interacts with LexA causing its activation and leading to its autocatalytic cleavage. The sequence is that of Protein RecA from Leptospira biflexa serovar Patoc (strain Patoc 1 / ATCC 23582 / Paris).